Here is a 478-residue protein sequence, read N- to C-terminus: Abscisate beta-glucosyltransferase (478 aa).

The Proton acceptor role is filled by His-20. Position 20 (His-20) interacts with an anthocyanidin. Catalysis depends on Asp-108, which acts as the Charge relay. The UDP-alpha-D-glucose site is built by Ala-340, Gln-342, His-357, Trp-360, Asn-361, Ser-362, and Glu-365. Ala-380 serves as a coordination point for an anthocyanidin. Residues Glu-381 and Gln-382 each contribute to the UDP-alpha-D-glucose site.

The protein belongs to the UDP-glycosyltransferase family.

It carries out the reaction 2-cis-(+)-abscisate + UDP-alpha-D-glucose = beta-D-glucopyranosyl cis-(+)-abscisate + UDP. Its function is as follows. Glucosyltransferase involved in the catabolism of abscisic acid (ABA). Adds a glucosyl group at the C-1 position of ABA; (S)-2-trans-abscisate is a better substrate than the natural (+)-S-abscisate or its enantiomer (-)-R-abscisate. No activity with (-)-phaseic acid (PA), methylated-ABA or with other hormones such as jasmonate, zeatin, auxin (IAA) or gibberellin A3 (GA3). In Phaseolus angularis (Azuki bean), this protein is Abscisate beta-glucosyltransferase (AOG).